A 1369-amino-acid chain; its full sequence is Rho-associated protein kinase 1 (1369 aa).

Ser2 carries the post-translational modification N-acetylserine. A Protein kinase domain is found at 76–338 (YEVVKVIGRG…VEEIKRHLFF (263 aa)). ATP contacts are provided by residues 82 to 90 (IGRGAFGEV) and Lys105. The Proton acceptor role is filled by Asp198. One can recognise an AGC-kinase C-terminal domain in the interval 341–409 (DQWAWETLRD…YSNRRYLPSA (69 aa)). Residues 368–727 (FDDLEEDKGD…KKLKEEREAR (360 aa)) are interaction with FHOD1. A coiled-coil region spans residues 422–692 (KNVQESLQKT…RLEQEVNEHK (271 aa)). The 78-residue stretch at 479 to 556 (SAVSQIEKEK…LEEANDLLRT (78 aa)) folds into the REM-1 domain. The segment at 707–946 (EAKSVAMCEM…TVSRLEEANN (240 aa)) is SHROOM3 binding. A RhoBD domain is found at 949–1015 (TKDIELLRKE…LAEIMNRKDF (67 aa)). Residues 998-1010 (LKTQAVNKLAEIM) are RHOA binding. A coiled-coil region spans residues 1011 to 1102 (NRKDFKIDRK…KLLDLSDSTS (92 aa)). Phosphoserine is present on residues Ser1105 and Ser1108. Residues 1115-1369 (NLPVGSACIP…VVKNTSGKTS (255 aa)) form an auto-inhibitory region. Positions 1133 to 1332 (SSRIEGWLSV…WVTHLVKKIP (200 aa)) constitute a PH domain. Residues 1243–1298 (GHEFIPTLYHFPANCEACAKPLWHVFKPPPALECRRCHVKSHRDHLDKKEDLIPPC) form a Phorbol-ester/DAG-type zinc finger. The residue at position 1343 (Ser1343) is a Phosphoserine.

Belongs to the protein kinase superfamily. AGC Ser/Thr protein kinase family. Homodimer. Interacts with GEM, MYLC2B, RHOE, LIMK1, LIMK2, TSG101, CHORDC1, DAPK3, PFN1, PTEN and JIP3. Interacts with FHOD1 in a Src-dependent manner. Interacts with ITGB1BP1 (via N-terminus and PTB domain). Interacts with RHOA (activated by GTP), RHOB, RHOC and PPP1R12A. Interacts with SHROOM3. The cofactor is Mg(2+). Autophosphorylated on serine and threonine residues. Post-translationally, cleaved by caspase-3 during apoptosis. This leads to constitutive activation of the kinase and membrane blebbing. In terms of tissue distribution, highly expressed in brain, spleen, lung, liver, skeletal muscle, kidney and testis.

The protein resides in the cytoplasm. The protein localises to the cytoskeleton. It is found in the microtubule organizing center. Its subcellular location is the centrosome. It localises to the centriole. The protein resides in the golgi apparatus membrane. The protein localises to the cell projection. It is found in the bleb. Its subcellular location is the cell membrane. It localises to the lamellipodium. The protein resides in the ruffle. It carries out the reaction L-seryl-[protein] + ATP = O-phospho-L-seryl-[protein] + ADP + H(+). It catalyses the reaction L-threonyl-[protein] + ATP = O-phospho-L-threonyl-[protein] + ADP + H(+). Its activity is regulated as follows. Activated by RHOA binding. Inhibited by Y-27632. Its function is as follows. Protein kinase which is a key regulator of the actin cytoskeleton and cell polarity. Involved in regulation of smooth muscle contraction, actin cytoskeleton organization, stress fiber and focal adhesion formation, neurite retraction, cell adhesion and motility via phosphorylation of DAPK3, GFAP, LIMK1, LIMK2, MYL9/MLC2, TPPP, PFN1 and PPP1R12A. Phosphorylates FHOD1 and acts synergistically with it to promote SRC-dependent non-apoptotic plasma membrane blebbing. Phosphorylates JIP3 and regulates the recruitment of JNK to JIP3 upon UVB-induced stress. Acts as a suppressor of inflammatory cell migration by regulating PTEN phosphorylation and stability. Acts as a negative regulator of VEGF-induced angiogenic endothelial cell activation. Required for centrosome positioning and centrosome-dependent exit from mitosis. Plays a role in terminal erythroid differentiation. Inhibits podocyte motility via regulation of actin cytoskeletal dynamics and phosphorylation of CFL1. Promotes keratinocyte terminal differentiation. Involved in osteoblast compaction through the fibronectin fibrillogenesis cell-mediated matrix assembly process, essential for osteoblast mineralization. May regulate closure of the eyelids and ventral body wall by inducing the assembly of actomyosin bundles. This is Rho-associated protein kinase 1 (Rock1) from Rattus norvegicus (Rat).